Consider the following 27-residue polypeptide: Cupiennin-4a (27 aa).

E27 is modified (glutamic acid 1-amide).

In terms of tissue distribution, expressed by the venom gland.

The protein localises to the secreted. The chain is Cupiennin-4a from Cupiennius salei (American wandering spider).